A 212-amino-acid polypeptide reads, in one-letter code: Ribonuclease HII (212 aa).

Positions 22 to 212 (ILIAGLDEAG…APLKGMIDGL (191 aa)) constitute an RNase H type-2 domain. Positions 28, 29, and 123 each coordinate a divalent metal cation.

Belongs to the RNase HII family. It depends on Mn(2+) as a cofactor. The cofactor is Mg(2+).

The protein localises to the cytoplasm. The enzyme catalyses Endonucleolytic cleavage to 5'-phosphomonoester.. Endonuclease that specifically degrades the RNA of RNA-DNA hybrids. The polypeptide is Ribonuclease HII (Dehalococcoides mccartyi (strain ATCC BAA-2100 / JCM 16839 / KCTC 5957 / BAV1)).